The following is a 195-amino-acid chain: Recombination protein RecR (195 aa).

The segment at 53-68 (CSVCFNIDVKSPCSIC) adopts a C4-type zinc-finger fold. Positions 76-171 (QLLCIVEELG…KITRLACGIP (96 aa)) constitute a Toprim domain.

It belongs to the RecR family.

Functionally, may play a role in DNA repair. It seems to be involved in an RecBC-independent recombinational process of DNA repair. It may act with RecF and RecO. This is Recombination protein RecR from Ehrlichia canis (strain Jake).